We begin with the raw amino-acid sequence, 279 residues long: Digeranylgeranylglyceryl phosphate synthase (279 aa).

Helical transmembrane passes span 27-47 (LIAT…VALI), 90-110 (FVGG…IAII), 127-147 (VLGN…GGAF), 199-219 (TGIF…LPFG), 222-242 (WGLF…FGAF), and 259-279 (TSIL…AAVI).

Belongs to the UbiA prenyltransferase family. DGGGP synthase subfamily. The cofactor is Mg(2+).

The protein resides in the cell membrane. It catalyses the reaction sn-3-O-(geranylgeranyl)glycerol 1-phosphate + (2E,6E,10E)-geranylgeranyl diphosphate = 2,3-bis-O-(geranylgeranyl)-sn-glycerol 1-phosphate + diphosphate. The protein operates within membrane lipid metabolism; glycerophospholipid metabolism. Its function is as follows. Prenyltransferase that catalyzes the transfer of the geranylgeranyl moiety of geranylgeranyl diphosphate (GGPP) to the C2 hydroxyl of (S)-3-O-geranylgeranylglyceryl phosphate (GGGP). This reaction is the second ether-bond-formation step in the biosynthesis of archaeal membrane lipids. In Methanoculleus marisnigri (strain ATCC 35101 / DSM 1498 / JR1), this protein is Digeranylgeranylglyceryl phosphate synthase.